Here is a 188-residue protein sequence, read N- to C-terminus: Pallidipin (188 aa).

The first 18 residues, 1 to 18 (MKVIIAATLLGILMHAFA), serve as a signal peptide directing secretion. 3 disulfide bridges follow: C21–C137, C55–C184, and C89–C105.

It belongs to the calycin superfamily. Triabin family. As to expression, expressed in salivary glands.

The protein resides in the secreted. In terms of biological role, has been described as a specific inhibitor of collagen-induced platelet aggregation. However, as it does not affect platelet shape change or adhesion, it is plausible that it exerts its antiplatelet activity by a mechanism similar to that of triplatin, moubatin and dipetalodipin as scavenging eicosanoids involved in inflammation such as thromboxane A2 (TXA2). The sequence is that of Pallidipin from Meccus pallidipennis (Triatomine bug).